The following is a 137-amino-acid chain: Small ribosomal subunit protein uS12 (137 aa).

The segment at 1–57 (MPTINQLVRKPRKSKVEKPKSPALNVGYNSHKKVQTNVSSPQKRGVATRVGTMTPRK) is disordered. 3-methylthioaspartic acid is present on D102.

It belongs to the universal ribosomal protein uS12 family. Part of the 30S ribosomal subunit. Contacts proteins S8 and S17. May interact with IF1 in the 30S initiation complex.

With S4 and S5 plays an important role in translational accuracy. Functionally, interacts with and stabilizes bases of the 16S rRNA that are involved in tRNA selection in the A site and with the mRNA backbone. Located at the interface of the 30S and 50S subunits, it traverses the body of the 30S subunit contacting proteins on the other side and probably holding the rRNA structure together. The combined cluster of proteins S8, S12 and S17 appears to hold together the shoulder and platform of the 30S subunit. This is Small ribosomal subunit protein uS12 from Streptococcus pneumoniae (strain Hungary19A-6).